The primary structure comprises 315 residues: Transaldolase (315 aa).

The Schiff-base intermediate with substrate role is filled by Lys125.

This sequence belongs to the transaldolase family. Type 1 subfamily. In terms of assembly, homodimer.

The protein resides in the cytoplasm. The catalysed reaction is D-sedoheptulose 7-phosphate + D-glyceraldehyde 3-phosphate = D-erythrose 4-phosphate + beta-D-fructose 6-phosphate. Its pathway is carbohydrate degradation; pentose phosphate pathway; D-glyceraldehyde 3-phosphate and beta-D-fructose 6-phosphate from D-ribose 5-phosphate and D-xylulose 5-phosphate (non-oxidative stage): step 2/3. Functionally, transaldolase is important for the balance of metabolites in the pentose-phosphate pathway. The polypeptide is Transaldolase (Polaromonas naphthalenivorans (strain CJ2)).